A 138-amino-acid polypeptide reads, in one-letter code: Odorant-binding protein 22 (138 aa).

The N-terminal stretch at 1-16 is a signal peptide; that stretch reads MKVFIAVFALIAVAAA. Arg-30 contributes to the (5Z,8Z,11Z,14Z)-eicosatetraenoate binding site. Arg-30 and Tyr-61 together coordinate (9Z)-hexadecenoate. Positions 30 and 61 each coordinate (9Z,12Z)-octadecadienoate. 3 cysteine pairs are disulfide-bonded: Cys-33/Cys-64, Cys-60/Cys-113, and Cys-103/Cys-122. Residue Asn-127 is glycosylated (N-linked (GlcNAc...) asparagine).

It belongs to the PBP/GOBP family. In terms of assembly, monomer in solution. High-level expression in female mouth parts, particularly in the proboscis (at protein level). Moderate-level expression in female antenna (at protein level). Expressed in testis but not in the accessory gland or ejaculatory duct (at protein level). Expressed in spermathecae (at protein level). Female salivary gland. Female chemosensory organs: antenna, palp and proboscis. Not detected in midgut.

Its subcellular location is the secreted. Involved in modulation of blood-feeding behavior and capacity in female mosquitoes. Required for normal oviposition. Required for normal fecundity and fertility of female and male mosquitoes. Required for normal expression of VGA1 gene, which encodes the egg yolk protein vitellogenin-A1. Involved in regulation of spermatozoa development. Required for normal female longevity when mosquitoes are maintained on regular sugar meal. Binds long chain fatty acids. Functionally, (Microbial infection) Facilitates shedding of dengue virus type 2 particles into mosquito saliva. Does not affect dengue virus type 2 replication or infection prevalence in midgut and salivary glands at 14 days after blood feeding. Its function is as follows. (Microbial infection) Facilitates shedding of Zika virus particles into mosquito saliva. Does not affect Zika virus replication or infection prevalence in midgut and salivary glands at 14 days after blood feeding. The protein is Odorant-binding protein 22 of Aedes aegypti (Yellowfever mosquito).